The primary structure comprises 1288 residues: 5-oxoprolinase (1288 aa).

The disordered stretch occupies residues 1248–1270; sequence PGGGGYGDPEDPAPPPGSPPLFP. Residues 1259–1270 are compositionally biased toward pro residues; it reads PAPPPGSPPLFP. S1265 bears the Phosphoserine mark.

This sequence belongs to the oxoprolinase family. Homodimer. As to expression, expressed in testis, kidney and liver.

It is found in the cytoplasm. The protein localises to the cytosol. The enzyme catalyses 5-oxo-L-proline + ATP + 2 H2O = L-glutamate + ADP + phosphate + H(+). In terms of biological role, catalyzes the cleavage of 5-oxo-L-proline to form L-glutamate coupled to the hydrolysis of ATP to ADP and inorganic phosphate. The sequence is that of 5-oxoprolinase (Oplah) from Rattus norvegicus (Rat).